Consider the following 99-residue polypeptide: Integration host factor subunit alpha (99 aa).

The protein belongs to the bacterial histone-like protein family. In terms of assembly, heterodimer of an alpha and a beta chain.

Its function is as follows. This protein is one of the two subunits of integration host factor, a specific DNA-binding protein that functions in genetic recombination as well as in transcriptional and translational control. The polypeptide is Integration host factor subunit alpha (Xylella fastidiosa (strain M12)).